Consider the following 1039-residue polypeptide: Probable inorganic carbon transporter subunit DabA 1 (1039 aa).

The Zn(2+) site is built by Cys462, Asp464, His721, and Cys736.

It belongs to the inorganic carbon transporter (TC 9.A.2) DabA family. As to quaternary structure, forms a complex with DabB. It depends on Zn(2+) as a cofactor.

The protein localises to the cell inner membrane. Functionally, part of an energy-coupled inorganic carbon pump. In Nitrobacter hamburgensis (strain DSM 10229 / NCIMB 13809 / X14), this protein is Probable inorganic carbon transporter subunit DabA 1.